Here is a 278-residue protein sequence, read N- to C-terminus: Large ribosomal subunit protein uL2 (278 aa).

Residues 223–278 (GVAMNPIDHPHGGGEGRTSGGRHPVTPWGFPTKGKKTRSNKRTDTFIVSSRHNRKK) form a disordered region.

Belongs to the universal ribosomal protein uL2 family. In terms of assembly, part of the 50S ribosomal subunit. Forms a bridge to the 30S subunit in the 70S ribosome.

Functionally, one of the primary rRNA binding proteins. Required for association of the 30S and 50S subunits to form the 70S ribosome, for tRNA binding and peptide bond formation. It has been suggested to have peptidyltransferase activity; this is somewhat controversial. Makes several contacts with the 16S rRNA in the 70S ribosome. This Methylobacterium sp. (strain 4-46) protein is Large ribosomal subunit protein uL2.